The primary structure comprises 604 residues: Glutamine--fructose-6-phosphate aminotransferase [isomerizing] (604 aa).

The Nucleophile; for GATase activity role is filled by cysteine 2. One can recognise a Glutamine amidotransferase type-2 domain in the interval 2–218 (CGIVGVVGNR…DKELVILTKD (217 aa)). SIS domains are found at residues 284–423 (IITS…ANGK) and 456–594 (VQAL…VDKP). Lysine 599 serves as the catalytic For Fru-6P isomerization activity.

As to quaternary structure, homodimer.

It is found in the cytoplasm. It catalyses the reaction D-fructose 6-phosphate + L-glutamine = D-glucosamine 6-phosphate + L-glutamate. In terms of biological role, catalyzes the first step in hexosamine metabolism, converting fructose-6P into glucosamine-6P using glutamine as a nitrogen source. This chain is Glutamine--fructose-6-phosphate aminotransferase [isomerizing], found in Streptococcus pyogenes serotype M1.